The following is a 451-amino-acid chain: Trigger factor (451 aa).

The 86-residue stretch at 173–258 folds into the PPIase FKBP-type domain; it reads GDRVTLDFVG…LKKIEWAHLP (86 aa).

It belongs to the FKBP-type PPIase family. Tig subfamily.

It localises to the cytoplasm. It catalyses the reaction [protein]-peptidylproline (omega=180) = [protein]-peptidylproline (omega=0). Involved in protein export. Acts as a chaperone by maintaining the newly synthesized protein in an open conformation. Functions as a peptidyl-prolyl cis-trans isomerase. The protein is Trigger factor of Cupriavidus pinatubonensis (strain JMP 134 / LMG 1197) (Cupriavidus necator (strain JMP 134)).